The following is a 324-amino-acid chain: tRNA dimethylallyltransferase (324 aa).

An ATP-binding site is contributed by 17–24; the sequence is GPTASGKT. 19–24 serves as a coordination point for substrate; that stretch reads TASGKT. Interaction with substrate tRNA regions lie at residues 42 to 45, 166 to 170, and 251 to 256; these read DSAL, QRIQR, and RCVGYR.

This sequence belongs to the IPP transferase family. As to quaternary structure, monomer. It depends on Mg(2+) as a cofactor.

It carries out the reaction adenosine(37) in tRNA + dimethylallyl diphosphate = N(6)-dimethylallyladenosine(37) in tRNA + diphosphate. Catalyzes the transfer of a dimethylallyl group onto the adenine at position 37 in tRNAs that read codons beginning with uridine, leading to the formation of N6-(dimethylallyl)adenosine (i(6)A). The sequence is that of tRNA dimethylallyltransferase from Burkholderia thailandensis (strain ATCC 700388 / DSM 13276 / CCUG 48851 / CIP 106301 / E264).